The sequence spans 670 residues: DNA ligase (670 aa).

NAD(+) contacts are provided by residues 36-40 (DAQYD), 85-86 (SL), and Glu116. Lys118 functions as the N6-AMP-lysine intermediate in the catalytic mechanism. NAD(+) is bound by residues Arg139, Glu174, Lys290, and Lys314. Residues Cys408, Cys411, Cys426, and Cys431 each coordinate Zn(2+). In terms of domain architecture, BRCT spans 591–670 (STDQTLSGKT…QDFVKLLQQQ (80 aa)).

It belongs to the NAD-dependent DNA ligase family. LigA subfamily. It depends on Mg(2+) as a cofactor. The cofactor is Mn(2+).

The enzyme catalyses NAD(+) + (deoxyribonucleotide)n-3'-hydroxyl + 5'-phospho-(deoxyribonucleotide)m = (deoxyribonucleotide)n+m + AMP + beta-nicotinamide D-nucleotide.. Functionally, DNA ligase that catalyzes the formation of phosphodiester linkages between 5'-phosphoryl and 3'-hydroxyl groups in double-stranded DNA using NAD as a coenzyme and as the energy source for the reaction. It is essential for DNA replication and repair of damaged DNA. The protein is DNA ligase of Desulforamulus reducens (strain ATCC BAA-1160 / DSM 100696 / MI-1) (Desulfotomaculum reducens).